The sequence spans 212 residues: Pyridoxine/pyridoxamine 5'-phosphate oxidase (212 aa).

FMN contacts are provided by residues 61–66 (RTVLLK), 76–77 (FT), lysine 82, lysine 83, and glutamine 105. Lysine 66 is a substrate binding site. 3 residues coordinate substrate: tyrosine 123, arginine 127, and serine 131. Residues 140–141 (QS) and tryptophan 185 each bind FMN. 191-193 (RLH) contacts substrate. Arginine 195 is an FMN binding site.

The protein belongs to the pyridoxamine 5'-phosphate oxidase family. As to quaternary structure, homodimer. FMN serves as cofactor.

It carries out the reaction pyridoxamine 5'-phosphate + O2 + H2O = pyridoxal 5'-phosphate + H2O2 + NH4(+). The catalysed reaction is pyridoxine 5'-phosphate + O2 = pyridoxal 5'-phosphate + H2O2. The protein operates within cofactor metabolism; pyridoxal 5'-phosphate salvage; pyridoxal 5'-phosphate from pyridoxamine 5'-phosphate: step 1/1. It functions in the pathway cofactor metabolism; pyridoxal 5'-phosphate salvage; pyridoxal 5'-phosphate from pyridoxine 5'-phosphate: step 1/1. In terms of biological role, catalyzes the oxidation of either pyridoxine 5'-phosphate (PNP) or pyridoxamine 5'-phosphate (PMP) into pyridoxal 5'-phosphate (PLP). This Vesicomyosocius okutanii subsp. Calyptogena okutanii (strain HA) protein is Pyridoxine/pyridoxamine 5'-phosphate oxidase.